Reading from the N-terminus, the 461-residue chain is Putative long chain fatty acid-CoA ligase VraA (461 aa).

This sequence belongs to the ATP-dependent AMP-binding enzyme family.

This is Putative long chain fatty acid-CoA ligase VraA (vraA) from Staphylococcus haemolyticus (strain JCSC1435).